The following is a 395-amino-acid chain: Secreted aspartyl protease 1 (395 aa).

Positions 1 to 20 (MQLSIQAIIGFVVAAGLAVA) are cleaved as a signal peptide. The propeptide at 21–88 (SELPSPMTVN…HLLLDLIDKR (68 aa)) is removed in mature form. Asn41 carries N-linked (GlcNAc...) asparagine glycosylation. The Peptidase A1 domain occupies 105-391 (WAGDVQFGQS…DMGKNRMGFA (287 aa)). Catalysis depends on residues Asp121 and Asp283. A disulfide bond links Cys321 and Cys352.

This sequence belongs to the peptidase A1 family.

The protein resides in the secreted. Its activity is regulated as follows. Inhibited by pepstatin A. Dominant secreted aspartyl protease that has a clear preference for aromatic residues in the P1' position directly adjacent to the cleavage site and, in particular, Trp. In addition, it generally cleaves peptides containing Lys, Arg, Phe, Tyr, or Nle (norleucine) in the P1 position, Nle and Glu at P2, and Arg and Val at P2'. Has important roles in facilitating the interaction of the yeast with the external environment. Is able to rapidly hydrolyze Staphylococcus aureus protein A, an important S.aureus virulence factor involved in immune evasion and biofilm formation. Shows anti-biofilm properties and thus plays a role in inter-kingdom interactions, beneficial for host skin health. The protein is Secreted aspartyl protease 1 of Malassezia globosa (strain ATCC MYA-4612 / CBS 7966) (Dandruff-associated fungus).